Here is a 417-residue protein sequence, read N- to C-terminus: UDP-N-acetylglucosamine 1-carboxyvinyltransferase (417 aa).

22 to 23 is a binding site for phosphoenolpyruvate; sequence KN. Residue arginine 92 participates in UDP-N-acetyl-alpha-D-glucosamine binding. Cysteine 116 serves as the catalytic Proton donor. Cysteine 116 is modified (2-(S-cysteinyl)pyruvic acid O-phosphothioketal). Residues aspartate 304 and isoleucine 326 each contribute to the UDP-N-acetyl-alpha-D-glucosamine site.

This sequence belongs to the EPSP synthase family. MurA subfamily.

The protein resides in the cytoplasm. It catalyses the reaction phosphoenolpyruvate + UDP-N-acetyl-alpha-D-glucosamine = UDP-N-acetyl-3-O-(1-carboxyvinyl)-alpha-D-glucosamine + phosphate. It functions in the pathway cell wall biogenesis; peptidoglycan biosynthesis. Cell wall formation. Adds enolpyruvyl to UDP-N-acetylglucosamine. The chain is UDP-N-acetylglucosamine 1-carboxyvinyltransferase from Geotalea uraniireducens (strain Rf4) (Geobacter uraniireducens).